The following is a 729-amino-acid chain: Fatty acid oxidation complex subunit alpha (729 aa).

The interval 1–189 is enoyl-CoA hydratase/isomerase; sequence MLYQSETLQL…KIGLVDAVVD (189 aa). Asp296 is a substrate binding site. The 3-hydroxyacyl-CoA dehydrogenase stretch occupies residues 311–729; that stretch reads AAPKLAAVLG…LLDVSTNQPA (419 aa). NAD(+) contacts are provided by residues Met324, Asp343, 400 to 402, Lys407, and Ser429; that span reads VVE. His450 (for 3-hydroxyacyl-CoA dehydrogenase activity) is an active-site residue. Asn453 is a binding site for NAD(+). Substrate contacts are provided by Asn500 and Tyr660.

The protein in the N-terminal section; belongs to the enoyl-CoA hydratase/isomerase family. It in the C-terminal section; belongs to the 3-hydroxyacyl-CoA dehydrogenase family. In terms of assembly, heterotetramer of two alpha chains (FadB) and two beta chains (FadA).

It catalyses the reaction a (3S)-3-hydroxyacyl-CoA + NAD(+) = a 3-oxoacyl-CoA + NADH + H(+). The catalysed reaction is a (3S)-3-hydroxyacyl-CoA = a (2E)-enoyl-CoA + H2O. It carries out the reaction a 4-saturated-(3S)-3-hydroxyacyl-CoA = a (3E)-enoyl-CoA + H2O. The enzyme catalyses (3S)-3-hydroxybutanoyl-CoA = (3R)-3-hydroxybutanoyl-CoA. It catalyses the reaction a (3Z)-enoyl-CoA = a 4-saturated (2E)-enoyl-CoA. The catalysed reaction is a (3E)-enoyl-CoA = a 4-saturated (2E)-enoyl-CoA. It functions in the pathway lipid metabolism; fatty acid beta-oxidation. Its function is as follows. Involved in the aerobic and anaerobic degradation of long-chain fatty acids via beta-oxidation cycle. Catalyzes the formation of 3-oxoacyl-CoA from enoyl-CoA via L-3-hydroxyacyl-CoA. It can also use D-3-hydroxyacyl-CoA and cis-3-enoyl-CoA as substrate. The polypeptide is Fatty acid oxidation complex subunit alpha (Yersinia pestis bv. Antiqua (strain Antiqua)).